The primary structure comprises 421 residues: MSNQRKRSNDEREEEDDEDAEGIGEWERAYVDDRSWEELQEDESGLLRPIDNSAIYHAQYRRRLRMLSAAAAGTRIQKGLIRYLYIVIDFSRAAAEMDFRPSRMAIMAKHVEAFIREFFDQNPLSQIGLVSIKNGVAHTLTDLGGSPETHIKALMGKLEALGDSSLQNALELVHEHLNQVPSYGHREVLILYSALCTCDPGDIMETIQKCKKSKLRCSVIGLSAEMFICKHLCQETGGLYSVAVDEVHLKDLLLEHAPPPPAIAEFAIANLIKMGFPQRAAEGSMAICSCHKEVKIGAGYMCPRCKARVCDLPTECTICGLTLVSSPHLARSYHHLFPIAPFDEVPALSSLNDNRRKLGKSCFGCQQSLIGAGNKPVPCVTCRKCKHYFCLDCDIYIHESLHNCPGCESIHRPKSVSLMEE.

The interval 1 to 26 (MSNQRKRSNDEREEEDDEDAEGIGEW) is disordered. The segment covering 11 to 24 (EREEEDDEDAEGIG) has biased composition (acidic residues). Residues 83–272 (YLYIVIDFSR…IAEFAIANLI (190 aa)) enclose the VWFA domain. The segment at 362 to 408 (CFGCQQSLIGAGNKPVPCVTCRKCKHYFCLDCDIYIHESLHNCPGCE) adopts an RING-type zinc-finger fold.

This sequence belongs to the GTF2H2 family. Component of the 7-subunit TFIIH core complex composed of XPB, XPD, TFB1/GTF2H1, GTF2H2/P44, TFB4/GTF2H3, TFB2/GTF2H4 and TFB5/GTF2H5, which is active in NER. The core complex associates with the 3-subunit CDK-activating kinase (CAK) module composed of CYCH1/cyclin H1, CDKD and MAT1/At4g30820 to form the 10-subunit holoenzyme (holo-TFIIH) active in transcription. Interacts with XPD.

It is found in the nucleus. In terms of biological role, component of the general transcription and DNA repair factor IIH (TFIIH) core complex, which is involved in general and transcription-coupled nucleotide excision repair (NER) of damaged DNA and, when complexed to CAK, in RNA transcription by RNA polymerase II. In NER, TFIIH acts by opening DNA around the lesion to allow the excision of the damaged oligonucleotide and its replacement by a new DNA fragment. In transcription, TFIIH has an essential role in transcription initiation. When the pre-initiation complex (PIC) has been established, TFIIH is required for promoter opening and promoter escape. Phosphorylation of the C-terminal tail (CTD) of the largest subunit of RNA polymerase II by the kinase module CAK controls the initiation of transcription. Can restore UV resistance in the NER-deficient ssl1-1 yeast mutant. This Arabidopsis thaliana (Mouse-ear cress) protein is General transcription factor IIH subunit 2.